We begin with the raw amino-acid sequence, 968 residues long: uncharacterized protein (968 aa).

A signal peptide spans 1 to 27; that stretch reads MHSWKKKLVVSQLALACTLAITSQANA. The 266-residue stretch at 703–968 folds into the Autotransporter domain; it reads GLADNGGAWV…SANVGVKYTW (266 aa).

This is an uncharacterized protein from Escherichia coli (strain K12).